Consider the following 341-residue polypeptide: Phosphoribosylformylglycinamidine cyclo-ligase (341 aa).

It belongs to the AIR synthase family.

The protein localises to the cytoplasm. It catalyses the reaction 2-formamido-N(1)-(5-O-phospho-beta-D-ribosyl)acetamidine + ATP = 5-amino-1-(5-phospho-beta-D-ribosyl)imidazole + ADP + phosphate + H(+). It functions in the pathway purine metabolism; IMP biosynthesis via de novo pathway; 5-amino-1-(5-phospho-D-ribosyl)imidazole from N(2)-formyl-N(1)-(5-phospho-D-ribosyl)glycinamide: step 2/2. This is Phosphoribosylformylglycinamidine cyclo-ligase from Lachnoclostridium phytofermentans (strain ATCC 700394 / DSM 18823 / ISDg) (Clostridium phytofermentans).